Here is a 693-residue protein sequence, read N- to C-terminus: Elongation factor G (693 aa).

In terms of domain architecture, tr-type G spans 8 to 282 (KNTRNIGIMA…AAIEYLPSPL (275 aa)). Residues 17-24 (AHIDAGKT), 81-85 (DTPGH), and 135-138 (NKMD) each bind GTP.

Belongs to the TRAFAC class translation factor GTPase superfamily. Classic translation factor GTPase family. EF-G/EF-2 subfamily.

It localises to the cytoplasm. In terms of biological role, catalyzes the GTP-dependent ribosomal translocation step during translation elongation. During this step, the ribosome changes from the pre-translocational (PRE) to the post-translocational (POST) state as the newly formed A-site-bound peptidyl-tRNA and P-site-bound deacylated tRNA move to the P and E sites, respectively. Catalyzes the coordinated movement of the two tRNA molecules, the mRNA and conformational changes in the ribosome. The polypeptide is Elongation factor G (Macrococcus caseolyticus (strain JCSC5402) (Macrococcoides caseolyticum)).